Here is a 159-residue protein sequence, read N- to C-terminus: MKVKLITVGKLKEKYLKDGIAEYIKRLGRFTKFESIELTDEKTPDNASESENKAILDKEGQRILAKVGDRDYVIALAIEGKQFPSEQFAKELEQATLRGYSDITFIIGGSLGLSPKVKKRANQLMSFGLLTFPHQLMRLVLVEQIYRAFMIQQGSPYHK.

S-adenosyl-L-methionine contacts are provided by residues Leu-76, Gly-108, and 127 to 132 (FGLLTF).

It belongs to the RNA methyltransferase RlmH family. Homodimer.

Its subcellular location is the cytoplasm. The enzyme catalyses pseudouridine(1915) in 23S rRNA + S-adenosyl-L-methionine = N(3)-methylpseudouridine(1915) in 23S rRNA + S-adenosyl-L-homocysteine + H(+). Its function is as follows. Specifically methylates the pseudouridine at position 1915 (m3Psi1915) in 23S rRNA. This is Ribosomal RNA large subunit methyltransferase H from Streptococcus thermophilus (strain ATCC BAA-491 / LMD-9).